Here is a 91-residue protein sequence, read N- to C-terminus: YcgL domain-containing protein Sde_1339 (91 aa).

The YcgL domain maps to 1 to 85; it reads MIVDIYRSAK…PPESYMNEIP (85 aa). Residues 72–91 are disordered; the sequence is QMPPPPESYMNEIPNDKMPR.

The protein is YcgL domain-containing protein Sde_1339 of Saccharophagus degradans (strain 2-40 / ATCC 43961 / DSM 17024).